Reading from the N-terminus, the 621-residue chain is Glucose 1,6-bisphosphate synthase (621 aa).

Residues R73 and S175 each coordinate alpha-D-glucose 1,6-bisphosphate. S175 functions as the Phosphoserine intermediate in the catalytic mechanism. Positions 175, 332, 334, and 336 each coordinate Mg(2+). S175 carries the phosphoserine modification. Alpha-D-glucose 1,6-bisphosphate is bound by residues D336, R337, E433, S435, and K447.

This sequence belongs to the phosphohexose mutase family. In terms of tissue distribution, expressed at highest levels in the brain and testis, at intermediate levels in thymus, spleen, lung and skeletal muscle, and at lowest levels in kidney, liver and heart.

It localises to the cytoplasm. The protein resides in the cytosol. It carries out the reaction (2R)-3-phospho-glyceroyl phosphate + alpha-D-glucose 1-phosphate = alpha-D-glucose 1,6-bisphosphate + (2R)-3-phosphoglycerate + H(+). The enzyme catalyses alpha-D-glucose 6-phosphate + (2R)-3-phospho-glyceroyl phosphate = alpha-D-glucose 1,6-bisphosphate + (2R)-3-phosphoglycerate + H(+). The catalysed reaction is (2R)-3-phospho-glyceroyl phosphate + alpha-D-ribose 1-phosphate = alpha-D-ribose 1,5-bisphosphate + (2R)-3-phosphoglycerate + H(+). It catalyses the reaction 2-deoxy-alpha-D-ribose 1-phosphate + (2R)-3-phospho-glyceroyl phosphate = 2-deoxy-alpha-D-ribose 1,5-bisphosphate + (2R)-3-phosphoglycerate + H(+). It carries out the reaction (2R)-3-phospho-glyceroyl phosphate + alpha-D-mannose 1-phosphate = alpha-D-mannose 1,6-bisphosphate + (2R)-3-phosphoglycerate + H(+). In terms of biological role, glucose 1,6-bisphosphate synthase using 1,3-bisphosphoglycerate as a phosphate donor and a series of 1-phosphate sugars, including glucose 1-phosphate, mannose 1-phosphate, ribose 1-phosphate and deoxyribose 1-phosphate, as acceptors. In vitro, also exhibits very low phosphopentomutase and phosphoglucomutase activity which are most probably not physiologically relevant. The protein is Glucose 1,6-bisphosphate synthase of Mus musculus (Mouse).